Reading from the N-terminus, the 202-residue chain is GTP cyclohydrolase-2 (202 aa).

48-52 (RLHSE) is a binding site for GTP. Positions 53, 64, and 66 each coordinate Zn(2+). GTP-binding positions include glutamine 69, 91 to 93 (EGR), and threonine 113. The Proton acceptor role is filled by aspartate 125. Residue arginine 127 is the Nucleophile of the active site. GTP contacts are provided by threonine 148 and lysine 153.

It belongs to the GTP cyclohydrolase II family. Requires Zn(2+) as cofactor.

It carries out the reaction GTP + 4 H2O = 2,5-diamino-6-hydroxy-4-(5-phosphoribosylamino)-pyrimidine + formate + 2 phosphate + 3 H(+). Its pathway is cofactor biosynthesis; riboflavin biosynthesis; 5-amino-6-(D-ribitylamino)uracil from GTP: step 1/4. In terms of biological role, catalyzes the conversion of GTP to 2,5-diamino-6-ribosylamino-4(3H)-pyrimidinone 5'-phosphate (DARP), formate and pyrophosphate. In Colwellia psychrerythraea (strain 34H / ATCC BAA-681) (Vibrio psychroerythus), this protein is GTP cyclohydrolase-2.